The following is a 305-amino-acid chain: MKKIIFMGTPSYATCILKALVENENFKLVALFTQPDKAVGRKQILTPSDTKAFLSQNYPSIPIFTPSSLKDENIIREIKDLNPDFIVVAAYGKILPKAILDLAPCVNLHASLLPKYRGASPIQSAILNKDEKSGVCTMLMEEGLDTGAVLESLECDIKDKNSSEVFELLANLAAKLILSTLLNFDKIIPKKQEESLATLCRKIKKEDGLINLQNARELYQKYLAFTPWPGVFLENGLKFLELELVDELKQNARMGEILELEKESFLLACKQGVLRIKKLQESGKKALDGRTYLNGKRLKSEDSLC.

111–114 serves as a coordination point for (6S)-5,6,7,8-tetrahydrofolate; the sequence is SLLP.

Belongs to the Fmt family.

The enzyme catalyses L-methionyl-tRNA(fMet) + (6R)-10-formyltetrahydrofolate = N-formyl-L-methionyl-tRNA(fMet) + (6S)-5,6,7,8-tetrahydrofolate + H(+). Attaches a formyl group to the free amino group of methionyl-tRNA(fMet). The formyl group appears to play a dual role in the initiator identity of N-formylmethionyl-tRNA by promoting its recognition by IF2 and preventing the misappropriation of this tRNA by the elongation apparatus. The chain is Methionyl-tRNA formyltransferase from Campylobacter jejuni subsp. jejuni serotype O:6 (strain 81116 / NCTC 11828).